The sequence spans 161 residues: Phosphopantetheine adenylyltransferase (161 aa).

Substrate is bound at residue serine 11. ATP contacts are provided by residues 11 to 12 (SF) and histidine 19. 3 residues coordinate substrate: lysine 43, leucine 75, and arginine 89. Residues 90-92 (GLR), glutamate 100, and 125-131 (YSYLSSS) each bind ATP.

The protein belongs to the bacterial CoaD family. In terms of assembly, homohexamer. The cofactor is Mg(2+).

The protein resides in the cytoplasm. The enzyme catalyses (R)-4'-phosphopantetheine + ATP + H(+) = 3'-dephospho-CoA + diphosphate. It functions in the pathway cofactor biosynthesis; coenzyme A biosynthesis; CoA from (R)-pantothenate: step 4/5. In terms of biological role, reversibly transfers an adenylyl group from ATP to 4'-phosphopantetheine, yielding dephospho-CoA (dPCoA) and pyrophosphate. This is Phosphopantetheine adenylyltransferase from Geotalea daltonii (strain DSM 22248 / JCM 15807 / FRC-32) (Geobacter daltonii).